Here is a 241-residue protein sequence, read N- to C-terminus: MTMPFGYASPEQQVRDKSEYARKGIARGRSVVVLTYVDGILFVAENPSTTLHKISEMYDRIGFAAVGKYNEFENLRTAGIRIMDTRGYMYDRRDVTSRALANAYAQTLGAIFTESIKPYEVEIVVAEVGHTAADDQIFRLTYDGSIADERGFIAIGGQSEQVLTSLREHHTEGQPLATALRVAVDALTAGAPPGAQNGERTLTAGNLEVAMLDRKRSRRLFKRIVGSQLDGLLEETAPSAS.

This sequence belongs to the peptidase T1A family. The 20S proteasome core is composed of 14 alpha and 14 beta subunits that assemble into four stacked heptameric rings, resulting in a barrel-shaped structure. The two inner rings, each composed of seven catalytic beta subunits, are sandwiched by two outer rings, each composed of seven alpha subunits. The catalytic chamber with the active sites is on the inside of the barrel. Has a gated structure, the ends of the cylinder being occluded by the N-termini of the alpha-subunits. Is capped by the proteasome-associated ATPase, ARC.

The protein localises to the cytoplasm. It participates in protein degradation; proteasomal Pup-dependent pathway. With respect to regulation, the formation of the proteasomal ATPase ARC-20S proteasome complex, likely via the docking of the C-termini of ARC into the intersubunit pockets in the alpha-rings, may trigger opening of the gate for substrate entry. Interconversion between the open-gate and close-gate conformations leads to a dynamic regulation of the 20S proteasome proteolysis activity. Component of the proteasome core, a large protease complex with broad specificity involved in protein degradation. This is Proteasome subunit alpha from Parafrankia sp. (strain EAN1pec).